The following is a 472-amino-acid chain: Glutamate--tRNA ligase (472 aa).

The short motif at 9-19 (PSPTGYLHVGG) is the 'HIGH' region element. Positions 98, 100, 125, and 127 each coordinate Zn(2+). Residues 237–241 (KLSKR) carry the 'KMSKS' region motif. Lys240 serves as a coordination point for ATP.

The protein belongs to the class-I aminoacyl-tRNA synthetase family. Glutamate--tRNA ligase type 1 subfamily. In terms of assembly, monomer. It depends on Zn(2+) as a cofactor.

It is found in the cytoplasm. It catalyses the reaction tRNA(Glu) + L-glutamate + ATP = L-glutamyl-tRNA(Glu) + AMP + diphosphate. Catalyzes the attachment of glutamate to tRNA(Glu) in a two-step reaction: glutamate is first activated by ATP to form Glu-AMP and then transferred to the acceptor end of tRNA(Glu). This chain is Glutamate--tRNA ligase, found in Klebsiella pneumoniae subsp. pneumoniae (strain ATCC 700721 / MGH 78578).